The sequence spans 65 residues: uncharacterized protein (65 aa).

This is an uncharacterized protein from Bacillus subtilis (strain 168).